The primary structure comprises 897 residues: Chromodomain-helicase-DNA-binding protein 1-like (897 aa).

At arginine 9 the chain carries Omega-N-methylarginine. The Helicase ATP-binding domain occupies 58–223 (AQRFHCQNGC…YSLLSFVEPD (166 aa)). 71–78 (DEMGLGKT) provides a ligand contact to ATP. Positions 174–177 (DEAH) match the DEAH box motif. Residues 351–513 (LLDKLLAFLY…QKPAADADLQ (163 aa)) form the Helicase C-terminal domain. Phosphoserine is present on residues serine 540, serine 607, serine 618, serine 628, and serine 636. The interval 601–635 (TLLEKASQEGRSLRNKGSVLIPGLVEGSTKRKRVL) is regulatory linker segment (RLS). The required for ATPase activity stretch occupies residues 615-673 (NKGSVLIPGLVEGSTKRKRVLSPEELEDRQKKRQEAAAKRRRLIEEKKRQKEEAEHKKK). 2 disordered regions span residues 628–654 (STKR…AAKR) and 687–711 (LPSE…DYQD). Residues 638–675 (EELEDRQKKRQEAAAKRRRLIEEKKRQKEEAEHKKKMA) are a coiled coil. Over residues 642–654 (DRQKKRQEAAAKR) the composition is skewed to basic and acidic residues. Residues 690–711 (EESEPEDLENGEESSAELDYQD) show a composition bias toward acidic residues. The Macro domain occupies 704–897 (SAELDYQDPD…SSSSSRQLVP (194 aa)). Serine 891 is modified (phosphoserine).

Belongs to the SNF2/RAD54 helicase family. In terms of assembly, interacts with nucleosomes; interacts with the acidic patch of histones. Interacts (via macro domain) with PARP1; interacts only when PARP1 is poly-ADP-ribosylated (PARylated). Interacts with CIAO1. As to expression, frequently overexpressed in hepatomacellular carcinomas.

The protein resides in the nucleus. It localises to the chromosome. It catalyses the reaction ATP + H2O = ADP + phosphate + H(+). Adopts an inactive conformation in absence of DNA damage. Binding to poly-ADP-ribosylated histones activates the ATP-dependent chromatin remodeler activity. Its function is as follows. ATP-dependent chromatin remodeler that mediates chromatin-remodeling following DNA damage. Recruited to DNA damage sites through interaction with poly-ADP-ribose: specifically recognizes and binds histones that are poly-ADP-ribosylated on serine residues in response to DNA damage. Poly-ADP-ribose-binding activates the ATP-dependent chromatin remodeler activity, thereby regulating chromatin during DNA repair. Catalyzes nucleosome sliding away from DNA breaks in an ATP-dependent manner. Chromatin remodeling activity promotes PARP2 removal from chromatin. This chain is Chromodomain-helicase-DNA-binding protein 1-like, found in Homo sapiens (Human).